We begin with the raw amino-acid sequence, 260 residues long: Phosphate import ATP-binding protein PstB (260 aa).

The ABC transporter domain maps to 14-255 (IETENLNLFY…PKNTKTEEYI (242 aa)). An ATP-binding site is contributed by 46 to 53 (GPSGCGKS).

It belongs to the ABC transporter superfamily. Phosphate importer (TC 3.A.1.7) family. In terms of assembly, the complex is composed of two ATP-binding proteins (PstB), two transmembrane proteins (PstC and PstA) and a solute-binding protein (PstS).

The protein resides in the cell inner membrane. The catalysed reaction is phosphate(out) + ATP + H2O = ADP + 2 phosphate(in) + H(+). In terms of biological role, part of the ABC transporter complex PstSACB involved in phosphate import. Responsible for energy coupling to the transport system. In Borreliella afzelii (strain PKo) (Borrelia afzelii), this protein is Phosphate import ATP-binding protein PstB.